A 96-amino-acid chain; its full sequence is Cytoplasmic envelopment protein 3 (96 aa).

The N-myristoyl glycine; by host moiety is linked to residue G2. An asp/Glu-rich (acidic) region spans residues 37 to 43; the sequence is DIESEEE. S40 carries the phosphoserine modification. The tract at residues 50–96 is disordered; that stretch reads PDVRVVTRAPGPQYRRPSDPPSRHTRRRDPDVARPPATLTPPLSDSE. The segment covering 65–81 has biased composition (basic and acidic residues); it reads RPSDPPSRHTRRRDPDV.

It belongs to the herpesviridae cytoplasmic envelopment protein 3 family. Interacts with cytoplasmic envelopment protein 2; this interaction is essential for the proper localization of each protein to the assembly complex and thus for the production of infectious virus. Interacts with gE (via C-terminus). Interacts with gD (via C-terminus). Interacts with UL56. Post-translationally, myristoylation and palmitoylation (probably on one or more of the nearby cysteines at the N-terminus) enable membrane-binding and Golgi apparatus-specific targeting and are essential for efficient packaging. Phosphorylated. Phosphorylation does not seem to be required for recycling to the host Golgi apparatus. Packaging is selective for underphosphorylated forms.

It localises to the virion tegument. Its subcellular location is the virion membrane. It is found in the host cell membrane. The protein localises to the host Golgi apparatus membrane. Plays an important role in the cytoplasmic envelopment of tegument proteins and capsids during the assembly and egress processes. Also participates in viral entry at the fusion step probably by regulating the core fusion machinery. The sequence is that of Cytoplasmic envelopment protein 3 from Homo sapiens (Human).